The chain runs to 270 residues: uncharacterized protein (270 aa).

Residues 166-186 form a disordered region; it reads RRKENNISNESVSEEPESPLF.

This is an uncharacterized protein from Ostreid herpesvirus 1 (isolate France) (OsHV-1).